The chain runs to 400 residues: Proline-rich protein 5 (400 aa).

Residues 301–358 form a disordered region; that stretch reads TDSTSKLSMAGTKPPGEGERPPISNGQFPPLHNLSDSQQGLYNSQRDSPLLPAPSSSP. Residues 334-347 are compositionally biased toward polar residues; it reads LSDSQQGLYNSQRD. The segment covering 348–358 has biased composition (low complexity); the sequence is SPLLPAPSSSP.

It belongs to the PROTOR family. In terms of assembly, associated component of the mechanistic target of rapamycin complex 2 (mTORC2).

Associated subunit of mTORC2, which regulates cell growth and survival in response to hormonal signals. This is Proline-rich protein 5 (prr5) from Xenopus laevis (African clawed frog).